The sequence spans 320 residues: Atrochrysone carboxyl ACP thioesterase (320 aa).

4 residues coordinate Zn(2+): His103, His105, Asp107, and His108. Asp107 functions as the Proton donor/acceptor in the catalytic mechanism.

The protein belongs to the metallo-beta-lactamase superfamily. Requires Zn(2+) as cofactor.

The enzyme catalyses atrochrysone carboxyl-[ACP] + H2O = atrochrysone carboxylate + holo-[ACP] + H(+). It functions in the pathway secondary metabolite biosynthesis. Atrochrysone carboxyl ACP thioesterase; part of the gene cluster that mediates the biosynthesis of geodin, an intermediate in the biosynthesis of other natural products. The pathway begins with the synthesis of atrochrysone thioester by the polyketide synthase (PKS) gedC. The atrochrysone carboxyl ACP thioesterase gedB then breaks the thioester bond and releases the atrochrysone carboxylic acid from gedC. The atrochrysone carboxylic acid is then converted to atrochrysone which is further transformed into emodinanthrone. The next step is performed by the emodinanthrone oxygenase gedH that catalyzes the oxidation of emodinanthrone to emodin. Emodin O-methyltransferase encoded probably by gedA then catalyzes methylation of the 8-hydroxy group of emodin to form questin. Ring cleavage of questin by questin oxidase gedK leads to desmethylsulochrin via several intermediates including questin epoxide. Another methylation step probably catalyzed by methyltransferase gedG leads to the formation of sulochrin which is further converted to dihydrogeodin by the sulochrin halogenase gedL. Finally, the dihydrogeodin oxidase gedJ catalyzes the stereospecific phenol oxidative coupling reaction converting dihydrogeodin to geodin. The chain is Atrochrysone carboxyl ACP thioesterase from Aspergillus terreus (strain NIH 2624 / FGSC A1156).